We begin with the raw amino-acid sequence, 29 residues long: GLPVCGETCFGGTCNTPGCSCSYPICTRN.

The cyclopeptide (Gly-Asn) cross-link spans 1–29 (GLPVCGETCFGGTCNTPGCSCSYPICTRN). 3 disulfide bridges follow: Cys-5–Cys-19, Cys-9–Cys-21, and Cys-14–Cys-26.

In terms of processing, this is a cyclic peptide.

Functionally, probably participates in a plant defense mechanism. The sequence is that of Cyclotide vibi-A from Viola biflora (Yellow wood violet).